The chain runs to 311 residues: tRNA-cytidine(32) 2-sulfurtransferase (311 aa).

A PP-loop motif motif is present at residues Ser47–Ser52. Cys122, Cys125, and Cys213 together coordinate [4Fe-4S] cluster.

Belongs to the TtcA family. As to quaternary structure, homodimer. Mg(2+) is required as a cofactor. It depends on [4Fe-4S] cluster as a cofactor.

It is found in the cytoplasm. The catalysed reaction is cytidine(32) in tRNA + S-sulfanyl-L-cysteinyl-[cysteine desulfurase] + AH2 + ATP = 2-thiocytidine(32) in tRNA + L-cysteinyl-[cysteine desulfurase] + A + AMP + diphosphate + H(+). The protein operates within tRNA modification. Catalyzes the ATP-dependent 2-thiolation of cytidine in position 32 of tRNA, to form 2-thiocytidine (s(2)C32). The sulfur atoms are provided by the cysteine/cysteine desulfurase (IscS) system. The protein is tRNA-cytidine(32) 2-sulfurtransferase of Escherichia coli O127:H6 (strain E2348/69 / EPEC).